A 335-amino-acid polypeptide reads, in one-letter code: Transcriptional adapter 1 (335 aa).

This sequence belongs to the TADA1 family. As to quaternary structure, component of the STAGA transcription coactivator-HAT complex, at least composed of SUPT3H, GCN5L2, TAF5L, TAF6L, SUPT7L, TADA3L, TAD1L, TAF10, TAF12, TRRAP and TAF9.

It localises to the nucleus. In terms of biological role, probably involved in transcriptional regulation. The chain is Transcriptional adapter 1 (TADA1) from Bos taurus (Bovine).